The following is a 443-amino-acid chain: Packaging protein 1 (443 aa).

Positions 1-75 (MSGAADGTVP…PEAAQPPPSR (75 aa)) are disordered. Residues 13–56 (EDTHQEDSGERECEQRPVHSGREATGESDPALERPDHGERHGPE) are compositionally biased toward basic and acidic residues. 169-176 (GPTGSGKS) is an ATP binding site. The interval 433–443 (VSYANKRKWYD) is DNA-binding.

This sequence belongs to the adenoviridae packaging protein 1 family. As to quaternary structure, homodimer. Part of a genome packaging complex composed of packaging proteins 1, 2 and 3; this complex specifically binds to the packaging sequence on the left end of viral genomic DNA and performs packaging of the viral genome. Interacts with protein 33K.

Its subcellular location is the virion. The protein localises to the host nucleus. It is found in the host nucleoplasm. It localises to the host nucleolus. In terms of biological role, component of the packaging machinery which encapsidates the viral DNA into preformed capsids and transcriptional activator of the viral major late promoter (MLP). Binds, along with packaging proteins 2 and 3, to the specific packaging sequence on the left end of viral genomic DNA and displays ATPase activity thereby providing the power stroke of the packaging machinery. The activity of packaging protein IVa2 is stimulated by protein 33K which acts as a terminase. May be the protein that pumps DNA into the capsid powered by ATP hydrolysis. Specifically binds to the 5'-CG-3' nucleotides of the repeats making up the packaging sequence. Component of the DEF-A and DEF-B transcription factors that bind downstream elements of the major late promoter (MLP), and stimulate transcription from the MLP after initiation of viral DNA replication. DEF-A is a heterodimer packaging proteins 1 and 2 and DEF-B is a homodimer of packaging protein 1. The protein is Packaging protein 1 of Pantherophis guttatus (Corn snake).